Consider the following 393-residue polypeptide: Sex hormone-binding globulin (393 aa).

Residues 1–27 (MEGRGPLATSPRRRWLLLLLLLPHSHQ) form the signal peptide. Laminin G-like domains are found at residues 35–208 (VHLS…PRSC) and 215–381 (GSFF…THSC). 2 cysteine pairs are disulfide-bonded: cysteine 183–cysteine 208 and cysteine 353–cysteine 381. Asparagine 371 and asparagine 387 each carry an N-linked (GlcNAc...) asparagine glycan.

As to quaternary structure, homodimer.

The protein resides in the secreted. Its function is as follows. Functions as an androgen transport protein, but may also be involved in receptor mediated processes. Each dimer binds one molecule of steroid. Specific for 5-alpha-dihydrotestosterone, testosterone, and 17-beta-estradiol. Regulates the plasma metabolic clearance rate of steroid hormones by controlling their plasma concentration. The chain is Sex hormone-binding globulin (SHBG) from Crocuta crocuta (Spotted hyena).